Here is a 135-residue protein sequence, read N- to C-terminus: Large ribosomal subunit protein uL16c (135 aa).

This sequence belongs to the universal ribosomal protein uL16 family. As to quaternary structure, part of the 50S ribosomal subunit.

The protein resides in the plastid. It is found in the chloroplast. This is Large ribosomal subunit protein uL16c from Euglena gracilis.